Consider the following 115-residue polypeptide: Ribonuclease P protein component (115 aa).

The protein belongs to the RnpA family. As to quaternary structure, consists of a catalytic RNA component (M1 or rnpB) and a protein subunit.

The catalysed reaction is Endonucleolytic cleavage of RNA, removing 5'-extranucleotides from tRNA precursor.. Its function is as follows. RNaseP catalyzes the removal of the 5'-leader sequence from pre-tRNA to produce the mature 5'-terminus. It can also cleave other RNA substrates such as 4.5S RNA. The protein component plays an auxiliary but essential role in vivo by binding to the 5'-leader sequence and broadening the substrate specificity of the ribozyme. In Buchnera aphidicola subsp. Acyrthosiphon pisum (strain APS) (Acyrthosiphon pisum symbiotic bacterium), this protein is Ribonuclease P protein component.